Here is a 494-residue protein sequence, read N- to C-terminus: MTNATDIGANDVEMEVDPTAETLADEKKNQDVAAVQEIREQIRQIEKGVASKESRFILRVLRNLPNTRRKLNGVVFRNLAQSIYPAGADREAAVALMPAVEKDATELPDVPKKQVATKAPIAEVDAYFYLLLLVKLIDASDLKRAGISADALMAKISIQNRRTLDLIGAKSYFYFSRVAELKNSLEGIRSFLHARLRTATLRNDFEGQAVLINCLLRNYLHYALYDQADKLVKKSVYPESASNNEWARFLYYLGRIKAAKLEYSDAHKHLVQALRKSPQHAAIGFRQTVQKLIIVVELLLGNIPERVVFRQAGLRQSLGAYFQLTQAVRLGNLKRFGDVVSQYGPKFQLDHTFTLIIRLRHNVIKTAIRSIGLSYSRISPQDIAKRLMLDSAEDAEFIVSKAIRDGVIEATLDPAQNFMRSKESTDIYSTREPQLAFHERISFCLNLHNQSVKAMRYPPKSYGKDLESAEERREREQQDLELAKEMAEDDEDGF.

The 180-residue stretch at 247–426 (ARFLYYLGRI…NFMRSKESTD (180 aa)) folds into the PCI domain. Positions 458 to 494 (PPKSYGKDLESAEERREREQQDLELAKEMAEDDEDGF) are disordered. Basic and acidic residues predominate over residues 462-486 (YGKDLESAEERREREQQDLELAKEM).

This sequence belongs to the proteasome subunit S3 family. As to quaternary structure, the 26S proteasome is composed of a core protease, known as the 20S proteasome, capped at one or both ends by the 19S regulatory complex (RC). The RC is composed of at least 18 different subunits in two subcomplexes, the base and the lid, which form the portions proximal and distal to the 20S proteolytic core, respectively. As to expression, blood (crystal) cells and cuticle.

Functionally, acts as a regulatory subunit of the 26 proteasome which is involved in the ATP-dependent degradation of ubiquitinated proteins. In Drosophila melanogaster (Fruit fly), this protein is Probable 26S proteasome non-ATPase regulatory subunit 3 (Rpn3).